The following is a 456-amino-acid chain: Iroquois-class homeodomain protein irx-2 (456 aa).

The segment at residues 110–172 is a DNA-binding region (homeobox; TALE-type); it reads DPAYRKNATR…NARRRLKKEN (63 aa). 3 disordered regions span residues 172-214, 246-320, and 434-456; these read NKMT…AEDE, CESG…PASK, and RPTNFESKKDPSEVCTVGVQPYP. 2 stretches are compositionally biased toward basic and acidic residues: residues 192–205 and 246–256; these read GERVKEEQSEKAQD and CESGSESKEKY. Acidic residues predominate over residues 257 to 269; sequence DDDEDEEEGDEED. Polar residues predominate over residues 291 to 318; it reads NHQQDGSPRNSNKTSLDNGMSPSSQTPA.

The protein belongs to the TALE/IRO homeobox family. In terms of tissue distribution, expressed in the neural plate in overlapping patterns with other irx members, which all share an anterior border of expression. Also expressed in the placodes. Broadly expressed in the tailbud rhombencephalon (hindbrain). Outside the nervous system and at tailbud stages, expressed in the developing otic vesicle, branchial arches, prospective heart region and pronephros.

It localises to the nucleus. In terms of biological role, acts partially redundantly with other irx members in neural patterning. Required for formation of the posterior forebrain, midbrain, hindbrain, and to a lesser extent, spinal cord. Acts early in neural plate development to induce expression of some but not all proneural genes, and specify a neural precursor state. Also up-regulates repressors that prevent neuronal differentiation. Patterns the neuroectoderm in both the anterior/posterior and dorsal/ventral axes. Probably dispensable for pronephric kidney development. The polypeptide is Iroquois-class homeodomain protein irx-2 (Xenopus tropicalis (Western clawed frog)).